The primary structure comprises 396 residues: Nucleolar protein 12 (396 aa).

A disordered region spans residues Thr-43–Glu-104. Residues Ala-47 to Ser-58 show a composition bias toward acidic residues. Positions Lys-64–Lys-73 are enriched in basic residues. Over residues Glu-87–Glu-104 the composition is skewed to basic and acidic residues. RRM domains are found at residues Arg-112–His-220 and Arg-228–Asn-312. A disordered region spans residues Thr-361–Lys-396. A compositionally biased stretch (basic residues) spans Val-368 to Lys-396.

Belongs to the RRM RBM34 family.

It is found in the nucleus. The protein resides in the nucleolus. In terms of biological role, involved in pre-25S rRNA processing. This chain is Nucleolar protein 12 (NOP12), found in Candida glabrata (strain ATCC 2001 / BCRC 20586 / JCM 3761 / NBRC 0622 / NRRL Y-65 / CBS 138) (Yeast).